Reading from the N-terminus, the 755-residue chain is 17S U2 SnRNP complex component HTATSF1 (755 aa).

2 disordered regions span residues 1 to 53 (MSGT…YEWD) and 81 to 122 (GASS…KAES). An N-acetylserine modification is found at Ser2. Residues 90-122 (EDVHARTAEEPPQEKAPEPTDARKKGEKRKAES) are compositionally biased toward basic and acidic residues. 2 consecutive RRM domains span residues 133 to 218 (TNVY…VAKF) and 264 to 349 (RVVI…AWDG). A U2AF homology motif (UHM) region spans residues 259 to 353 (RMRHERVVII…AQAWDGTTDY (95 aa)). Residue Lys297 is modified to N6-acetyllysine. The tract at residues 380-415 (RGLRRSDSVSASERAGPSRARHFSEHPSTSKMNAQE) is disordered. The tract at residues 381-755 (GLRRSDSVSA…LSSDDDDDDI (375 aa)) is mediates interaction with the P-TEFb complex. 4 positions are modified to phosphoserine: Ser387, Ser403, Ser407, and Ser409. Over residues 405-415 (HPSTSKMNAQE) the composition is skewed to polar residues. Glycyl lysine isopeptide (Lys-Gly) (interchain with G-Cter in SUMO2) cross-links involve residues Lys429 and Lys430. The disordered stretch occupies residues 433 to 755 (KTEDGGEFEE…LSSDDDDDDI (323 aa)). Residues Ser445, Ser452, and Ser453 each carry the phosphoserine modification. Residues 462–476 (CPEKESEEGCPKRGF) show a composition bias toward basic and acidic residues. Phosphoserine occurs at positions 481, 485, 494, 498, 521, and 529. Residues 508–538 (LKNDCEENGLAKESEDDLNKESEEEVGPTKE) are compositionally biased toward basic and acidic residues. Acidic residues predominate over residues 539 to 552 (SEEDDSEKESDEDC). Positions 553 to 563 (SEKQSEDGSER) are enriched in basic and acidic residues. Residues Ser557, Ser561, and Ser579 each carry the phosphoserine modification. A compositionally biased stretch (acidic residues) spans 564–579 (EFEENGLEKDLDEEGS). Positions 580–590 (EKELHENVLDK) are enriched in basic and acidic residues. Residues 591–606 (ELEENDSENSEFEDDG) are compositionally biased toward acidic residues. A phosphoserine mark is found at Ser597, Ser600, Ser607, Ser616, and Ser624. Composition is skewed to acidic residues over residues 613-633 (EEGSEREFDEDSDEKEEEEDT) and 640-651 (DESDEKEDEEYA). Thr633 is modified (phosphothreonine). At Ser642 the chain carries Phosphoserine. Residues 652-674 (DEKGLEAADKKAEEGDADEKLFE) show a composition bias toward basic and acidic residues. Positions 675 to 713 (ESDDKEDEDADGKEVEDADEKLFEDDDSNEKLFDEEEDS) are enriched in acidic residues. Phosphoserine is present on residues Ser676, Ser702, Ser713, Ser714, and Ser721. Over residues 714 to 725 (SEKLFDDSDERG) the composition is skewed to basic and acidic residues. A Phosphoserine; by CK2 modification is found at Ser748.

This sequence belongs to the HTATSF1 family. Component of the 17S U2 SnRNP complex, a ribonucleoprotein complex that contains small nuclear RNA (snRNA) U2 and a number of specific proteins. Within the 17S U2 SnRNP complex, interacts (via UHM region) directly with SF3B1. Component of a complex which is at least composed of HTATSF1/Tat-SF1, the P-TEFb complex components CDK9 and CCNT1, RNA polymerase II, SUPT5H, and NCL/nucleolin. Interacts with GTF2F2/RAP30 and POLR2A. Interacts with TCERG1/CA150. Interacts with (poly-ADP-ribosylated) RPA1; promoting HTATSF1 recruitment to DNA damage sites. Interacts (when phosphorylated) with TOPBP1; promoting recruitment of TOPBP1 to DNA damage sites during S-phase. Phosphorylation at Ser-748 by CK2 during S-phase in response to DNA damage promotes interaction with TOPBP1 and double-strand break (DSB) repair via homologous recombination. Widely expressed.

The protein localises to the nucleus. It is found in the chromosome. In terms of biological role, component of the 17S U2 SnRNP complex of the spliceosome, a large ribonucleoprotein complex that removes introns from transcribed pre-mRNAs. The 17S U2 SnRNP complex (1) directly participates in early spliceosome assembly and (2) mediates recognition of the intron branch site during pre-mRNA splicing by promoting the selection of the pre-mRNA branch-site adenosine, the nucleophile for the first step of splicing. Within the 17S U2 SnRNP complex, HTATSF1 is required to stabilize the branchpoint-interacting stem loop. HTATSF1 is displaced from the 17S U2 SnRNP complex before the stable addition of the 17S U2 SnRNP complex to the spliceosome, destabilizing the branchpoint-interacting stem loop and allowing to probe intron branch site sequences. Also acts as a regulator of transcriptional elongation, possibly by mediating the reciprocal stimulatory effect of splicing on transcriptional elongation. Involved in double-strand break (DSB) repair via homologous recombination in S-phase by promoting the recruitment of TOPBP1 to DNA damage sites. Mechanistically, HTATSF1 is (1) recruited to DNA damage sites in S-phase via interaction with poly-ADP-ribosylated RPA1 and (2) phosphorylated by CK2, promoting recruitment of TOPBP1, thereby facilitating RAD51 nucleofilaments formation and RPA displacement, followed by homologous recombination. Functionally, (Microbial infection) In case of infection by HIV-1, it is up-regulated by the HIV-1 proteins NEF and gp120, acts as a cofactor required for the Tat-enhanced transcription of the virus. The polypeptide is 17S U2 SnRNP complex component HTATSF1 (Homo sapiens (Human)).